Consider the following 429-residue polypeptide: Keratin, type I cytoskeletal 20 (429 aa).

Positions 1–26 (MDFSRRSFHRSLSSSSQGPALSTSGS) are disordered. The interval 1 to 74 (MDFSRRSFHR…SNGGDLFGGN (74 aa)) is head. Residues 10 to 26 (RSLSSSSQGPALSTSGS) are compositionally biased toward low complexity. A phosphoserine mark is found at S13, S16, and S26. The tract at residues 75-110 (EKLAMQNLNDRLASYLEKVRSLEQSNSKLEAQIKQW) is coil 1A. One can recognise an IF rod domain in the interval 75–386 (EKLAMQNLND…RLLEGEDIKT (312 aa)). A linker 1 region spans residues 111-128 (YETNAPSTIRDYSSYYAQ). The segment at 129–220 (IKELQDQIKD…KEHQEEVEVL (92 aa)) is coil 1B. The tract at residues 221–243 (RRQLGNNVNVEVDAAPGLNLGEI) is linker 12. The segment at 244-382 (MNEMRQKYEI…ATYRRLLEGE (139 aa)) is coil 2. The segment at 383 to 429 (DIKTTEYQLNTLEAKDIKKTRKIKTVVEEVVDGKVVSSEVKEIEENI) is tail.

It belongs to the intermediate filament family. In terms of assembly, heterotetramer of two type I and two type II keratins. Associates with KRT8. Hyperphosphorylation at Ser-13 occurs during the early stages of apoptosis but becomes less prominent during the later stages. Phosphorylation at Ser-13 also increases in response to stress brought on by cell injury. Post-translationally, proteolytically cleaved by caspases during apoptosis. Cleavage occurs at Asp-233. In terms of tissue distribution, expressed predominantly in the intestinal epithelium in differentiated villus cells.

Functionally, plays a significant role in maintaining keratin filament organization in intestinal epithelia. When phosphorylated, plays a role in the secretion of mucin in the small intestine. The sequence is that of Keratin, type I cytoskeletal 20 (Krt20) from Rattus norvegicus (Rat).